The sequence spans 226 residues: Orotidine 5'-phosphate decarboxylase (226 aa).

Substrate is bound by residues D8, K30, 58 to 67 (DLKIHDIPNT), T117, R177, Q186, G206, and R207. The active-site Proton donor is the K60.

Belongs to the OMP decarboxylase family. Type 1 subfamily. Homodimer.

It carries out the reaction orotidine 5'-phosphate + H(+) = UMP + CO2. The protein operates within pyrimidine metabolism; UMP biosynthesis via de novo pathway; UMP from orotate: step 2/2. In terms of biological role, catalyzes the decarboxylation of orotidine 5'-monophosphate (OMP) to uridine 5'-monophosphate (UMP). The sequence is that of Orotidine 5'-phosphate decarboxylase from Campylobacter jejuni subsp. doylei (strain ATCC BAA-1458 / RM4099 / 269.97).